Reading from the N-terminus, the 366-residue chain is tRNA/tmRNA (uracil-C(5))-methyltransferase (366 aa).

Residues Gln190, Tyr218, Asn223, Glu239, and Asp299 each contribute to the S-adenosyl-L-methionine site. Cys324 acts as the Nucleophile in catalysis. Residue Glu358 is the Proton acceptor of the active site.

Belongs to the class I-like SAM-binding methyltransferase superfamily. RNA M5U methyltransferase family. TrmA subfamily.

It carries out the reaction uridine(54) in tRNA + S-adenosyl-L-methionine = 5-methyluridine(54) in tRNA + S-adenosyl-L-homocysteine + H(+). It catalyses the reaction uridine(341) in tmRNA + S-adenosyl-L-methionine = 5-methyluridine(341) in tmRNA + S-adenosyl-L-homocysteine + H(+). Its function is as follows. Dual-specificity methyltransferase that catalyzes the formation of 5-methyluridine at position 54 (m5U54) in all tRNAs, and that of position 341 (m5U341) in tmRNA (transfer-mRNA). The protein is tRNA/tmRNA (uracil-C(5))-methyltransferase of Cellvibrio japonicus (strain Ueda107) (Pseudomonas fluorescens subsp. cellulosa).